Consider the following 101-residue polypeptide: MNLERVSNEEKLNLCRKYYLGGFAFLPFLWLVNIFWFFKEAFFAPAYTEQSQIKGYVWRSAVGFLFWVIVLTTWITIFQIYRPRWGALGDYLSFTIPLGTP.

At 1-17 (MNLERVSNEEKLNLCRK) the chain is on the cytoplasmic side. An intramembrane region (helical) is located at residues 18-36 (YYLGGFAFLPFLWLVNIFW). Residues 37–57 (FFKEAFFAPAYTEQSQIKGYV) lie on the Cytoplasmic side of the membrane. Residues 58–78 (WRSAVGFLFWVIVLTTWITIF) traverse the membrane as a helical segment. The Lumenal segment spans residues 79–101 (QIYRPRWGALGDYLSFTIPLGTP).

Belongs to the PEN-2 family. In terms of assembly, the functional gamma-secretase complex is composed of at least four polypeptides: a presenilin homodimer (PSEN1 or PSEN2), nicastrin (NCSTN), APH1 (APH1A or APH1B) and PSENEN.

It localises to the endoplasmic reticulum membrane. The protein resides in the golgi apparatus. Its subcellular location is the golgi stack membrane. It is found in the cell membrane. The protein localises to the membrane. Functionally, essential subunit of the gamma-secretase complex, an endoprotease complex that catalyzes the intramembrane cleavage of integral membrane proteins such as Notch receptors and APP (amyloid-beta precursor protein). The gamma-secretase complex plays a role in Notch and Wnt signaling cascades and regulation of downstream processes via its role in processing key regulatory proteins, and by regulating cytosolic CTNNB1 levels. PSENEN modulates both endoproteolysis of presenilin and gamma-secretase activity. This chain is Gamma-secretase subunit PEN-2 (Psenen), found in Rattus norvegicus (Rat).